The following is a 488-amino-acid chain: MKYRDLREFLHHLEARGELKRIRHPVDPYLEMTEVCDRTLRAGGPALLFEHPRGYDTPVLGNLFGTPHRVALGMGAEEVAALREIGELLAFLRQPEPPKGMRDAWNQLPVFRRVLDMAPKTVRKAPCQERVIEGEDVDLSRWPIQTCWPGDAGPLITWALVITRGPEKERQNLGIYRQQVIGRNRVIMRWLAHRGGALDFAEHQRHYPGEPFPVAVALGADPATILGAVTPVPDAISEYAFAGLLRGSKTELVTCKGSSLQVPASAEVVLEGHIHPGDTAEEGPFADHTGYYNETETFPVFTIDRITHRADPIYHSTYTGRPPDEPAVLGEALNEVFVPILRKQFPEIVDFYLPPEGCSYRLAVVTIRKQYPGHAKRVMLGVWSFLRQFMYTKFIIVTDGDVDARDWKAVVWALTTRSDPRRDATFIDHSPIDYLDFASPISGLGSKMGLDATNKWPGETDRTWGTPATMDEATRARVDAYWAELGLD.

Asn172 provides a ligand contact to Mn(2+). Residues 175–177 (IYR), 189–191 (RWL), and 194–195 (RG) contribute to the prenylated FMN site. Mn(2+) is bound at residue Glu238. Residue Asp287 is the Proton donor of the active site.

It belongs to the UbiD family. As to quaternary structure, homohexamer. Prenylated FMN serves as cofactor. It depends on Mn(2+) as a cofactor.

It localises to the cell membrane. The enzyme catalyses a 4-hydroxy-3-(all-trans-polyprenyl)benzoate + H(+) = a 2-(all-trans-polyprenyl)phenol + CO2. Its pathway is cofactor biosynthesis; ubiquinone biosynthesis. Its function is as follows. Catalyzes the decarboxylation of 3-octaprenyl-4-hydroxy benzoate to 2-octaprenylphenol, an intermediate step in ubiquinone biosynthesis. This is 3-octaprenyl-4-hydroxybenzoate carboxy-lyase from Halorhodospira halophila (strain DSM 244 / SL1) (Ectothiorhodospira halophila (strain DSM 244 / SL1)).